The sequence spans 425 residues: Histidine--tRNA ligase 1 (425 aa).

Belongs to the class-II aminoacyl-tRNA synthetase family. Homodimer.

The protein localises to the cytoplasm. The catalysed reaction is tRNA(His) + L-histidine + ATP = L-histidyl-tRNA(His) + AMP + diphosphate + H(+). This Bacillus anthracis protein is Histidine--tRNA ligase 1.